Consider the following 1883-residue polypeptide: Endoribonuclease Dicer homolog 1 (1883 aa).

Disordered stretches follow at residues 71–97 (AESS…PELP), 129–188 (ARKE…DDRR), and 221–262 (RSGT…EKPV). The span at 75 to 96 (PAPPPPPPPPLPEPVPVAPPEL) shows a compositional bias: pro residues. Composition is skewed to basic and acidic residues over residues 129–138 (ARKEPRRESH) and 228–262 (ESDR…EKPV). One can recognise a Helicase ATP-binding domain in the interval 274–413 (VLEQAKSRNT…QEDCAIKIRN (140 aa)). 287–294 (LETGAGKT) contributes to the ATP binding site. Residues 358-361 (DECH) carry the DECH box motif. Positions 577 to 604 (KSETSDVEMQNTEKHNTNDLEEGELPDS) are disordered. The 161-residue stretch at 629–789 (LIKILLKYQH…RTDLSHLDGT (161 aa)) folds into the Helicase C-terminal domain. The region spanning 817 to 912 (AVGLIHFYCS…LPDRGSGEGE (96 aa)) is the Dicer dsRNA-binding fold domain. Positions 901–928 (TLLPDRGSGEGEKTEQNDEGEPLPGTAR) are disordered. Positions 907-916 (GSGEGEKTEQ) are enriched in basic and acidic residues. Positions 1163–1296 (HFSDYQNQGK…LPPELCLVHP (134 aa)) constitute a PAZ domain. 2 consecutive RNase III domains span residues 1320–1498 (LAVQ…VAGG) and 1538–1686 (FDTL…LDSG). Positions 1576, 1672, and 1675 each coordinate Mg(2+). 2 DRBM domains span residues 1712 to 1775 (HPVR…VLKE) and 1797 to 1872 (FTRQ…LLNR).

This sequence belongs to the helicase family. Dicer subfamily. In terms of assembly, may interact with ARGONAUTE1 or PINHEAD through their common PAZ domains. It depends on Mg(2+) as a cofactor. Requires Mn(2+) as cofactor.

The protein resides in the nucleus. Involved in the RNA silencing pathway. Cleaves double-stranded RNA to produce microRNAs (miRNAs) of 21-24 nucleotides which target the selective destruction of complementary RNAs. Regulates by this way the development of the plant. May not be involved in small interfering RNAs (siRNAs) production. The polypeptide is Endoribonuclease Dicer homolog 1 (DCL1) (Oryza sativa subsp. japonica (Rice)).